A 397-amino-acid chain; its full sequence is Glia-derived nexin (397 aa).

A signal peptide spans M1–Y19. N159 carries N-linked (GlcNAc...) asparagine glycosylation.

It belongs to the serpin family.

It localises to the secreted. The protein resides in the extracellular space. Serine protease inhibitor with activity toward thrombin, trypsin, and urokinase. Promotes neurite extension by inhibiting thrombin. Binds heparin. In Rattus norvegicus (Rat), this protein is Glia-derived nexin (Serpine2).